The following is a 1085-amino-acid chain: Solute carrier family 12 member 4 (1085 aa).

The Cytoplasmic portion of the chain corresponds to 1–119 (MPHFTVVPVD…RRAAEAPSMG (119 aa)). S24, S47, S51, S81, and S88 each carry phosphoserine. The chain crosses the membrane as a discontinuously helical span at residues 120 to 141 (TLMGVYLPCLQNIFGVILFLRL). The K(+) site is built by N131 and I132. Over 142–149 (TWMVGTAG) the chain is Extracellular. Residues 150-172 (VLQALLIVLICCCCTLLTAISMS) form a helical membrane-spanning segment. Over 173-196 (AIATNGVVPAGGSYFMISRSLGPE) the chain is Cytoplasmic. A helical transmembrane segment spans residues 197–225 (FGGAVGLCFYLGTTFAAAMYILGAIEILL). Y216 lines the K(+) pocket. Over 226–248 (TYIAPPAAIFYPSGAHDTSNATL) the chain is Extracellular. An N-linked (GlcNAc...) asparagine glycan is attached at N245. Transmembrane regions (helical) follow at residues 249 to 271 (NNMR…VGVK) and 272 to 297 (YVNK…GGIK). The Extracellular portion of the chain corresponds to 298-419 (SIFDPPVFPV…LYVVADIATS (122 aa)). A disulfide bond links C308 and C323. N-linked (GlcNAc...) asparagine glycans are attached at residues N312, N331, N347, and N361. An intrachain disulfide couples C343 to C353. A helical membrane pass occupies residues 420–440 (FTVLVGIFFPSVTGIMAGSNR). The K(+) site is built by P429 and T432. The chloride site is built by G433, I434, and M435. Topologically, residues 441 to 450 (SGDLRDAQKS) are cytoplasmic. A helical membrane pass occupies residues 451–473 (IPVGTILAIITTSLVYFSSVVLF). Residues 474 to 504 (GACIEGVVLRDKYGDGVSRNLVVGTLAWPSP) lie on the Extracellular side of the membrane. A helical membrane pass occupies residues 505-531 (WVIVIGSFFSTCGAGLQSLTGAPRLLQ). Residues 532–554 (AIAKDNIIPFLRVFGHGKVNGEP) are Cytoplasmic-facing. 2 helical membrane-spanning segments follow: residues 555 to 575 (TWAL…ASLD) and 576 to 598 (MVAP…ACAV). Y589 provides a ligand contact to chloride. The Cytoplasmic portion of the chain corresponds to 599-612 (QTLLRTPNWRPRFK). Transmembrane regions (helical) follow at residues 613 to 635 (YYHW…VSSW) and 636 to 651 (YYAL…IYKY). At 652-1085 (IEYQGAEKEW…GGREVITIYS (434 aa)) the chain is on the cytoplasmic side. The segment at 665 to 681 (IRGLSLSAARYALLRLE) is scissor helix. L697, K699, K707, Y708, and V730 together coordinate ATP. Phosphoserine is present on S734. Residues G794, W795, and Y797 each contribute to the ATP site. Phosphoserine is present on residues S916 and S967. T983 bears the Phosphothreonine mark. S1050 carries the post-translational modification Phosphoserine.

The protein belongs to the SLC12A transporter family. K/Cl co-transporter subfamily. In terms of assembly, homodimer; adopts a domain-swap conformation at the scissor helices connecting the transmembrane domain and C-terminal domain. Heterodimer with other K-Cl cotransporters. Post-translationally, phosphorylated, phosphorylation may regulate transporter activity. In terms of tissue distribution, ubiquitous. Levels are much higher in erythrocytes from patients with Hb SC and Hb SS compared to normal AA erythrocytes. This may contribute to red blood cell dehydration and to the manifestation of sickle cell disease by increasing the intracellular concentration of HbS. As to expression, not detected in circulating reticulocytes.

Its subcellular location is the cell membrane. The enzyme catalyses K(+)(in) + chloride(in) = K(+)(out) + chloride(out). Its activity is regulated as follows. Inhibited by WNK3. Mediates electroneutral potassium-chloride cotransport when activated by cell swelling. May contribute to cell volume homeostasis in single cells. May be involved in the regulation of basolateral Cl(-) exit in NaCl absorbing epithelia. In terms of biological role, no transporter activity. This Homo sapiens (Human) protein is Solute carrier family 12 member 4.